The chain runs to 205 residues: uncharacterized protein (205 aa).

Catalysis depends on charge relay system residues S119 and H160.

It belongs to the peptidase S51 family.

This is an uncharacterized protein from Listeria monocytogenes serovar 1/2a (strain ATCC BAA-679 / EGD-e).